The sequence spans 509 residues: Heat shock 70 kDa protein 14 (509 aa).

Belongs to the heat shock protein 70 family. In terms of assembly, component of ribosome-associated complex (RAC), a heterodimer composed of Hsp70/DnaK-type chaperone HSPA14 and Hsp40/DnaJ-type chaperone DNAJC2.

The protein localises to the cytoplasm. The protein resides in the cytosol. Component of the ribosome-associated complex (RAC), a complex involved in folding or maintaining nascent polypeptides in a folding-competent state. In the RAC complex, binds to the nascent polypeptide chain, while DNAJC2 stimulates its ATPase activity. The chain is Heat shock 70 kDa protein 14 (HSPA14) from Bos taurus (Bovine).